Consider the following 437-residue polypeptide: UDP-N-acetylmuramate--L-alanine ligase (437 aa).

Residue 108–114 (GAHGKTS) participates in ATP binding.

It belongs to the MurCDEF family.

It is found in the cytoplasm. The catalysed reaction is UDP-N-acetyl-alpha-D-muramate + L-alanine + ATP = UDP-N-acetyl-alpha-D-muramoyl-L-alanine + ADP + phosphate + H(+). It functions in the pathway cell wall biogenesis; peptidoglycan biosynthesis. In terms of biological role, cell wall formation. The polypeptide is UDP-N-acetylmuramate--L-alanine ligase (Staphylococcus epidermidis (strain ATCC 12228 / FDA PCI 1200)).